The following is a 183-amino-acid chain: Orotate phosphoribosyltransferase (183 aa).

5-phospho-alpha-D-ribose 1-diphosphate is bound by residues arginine 21, lysine 88, and 112–120 (EDVVTTGES). Orotate-binding residues include threonine 116 and arginine 144.

It belongs to the purine/pyrimidine phosphoribosyltransferase family. PyrE subfamily. Homodimer. The cofactor is Mg(2+).

The catalysed reaction is orotidine 5'-phosphate + diphosphate = orotate + 5-phospho-alpha-D-ribose 1-diphosphate. It functions in the pathway pyrimidine metabolism; UMP biosynthesis via de novo pathway; UMP from orotate: step 1/2. Catalyzes the transfer of a ribosyl phosphate group from 5-phosphoribose 1-diphosphate to orotate, leading to the formation of orotidine monophosphate (OMP). The chain is Orotate phosphoribosyltransferase from Thermus thermophilus (strain ATCC BAA-163 / DSM 7039 / HB27).